The following is a 320-amino-acid chain: GPI-specific phospholipase A2-like PGAP3 (320 aa).

The first 20 residues, 1-20 (MAERTARLLLLTVTVGLAWG), serve as a signal peptide directing secretion. Topologically, residues 21–98 (SQGDREPVYR…QFHGKWPFSR (78 aa)) are lumenal. Asn-40 carries an N-linked (GlcNAc...) asparagine glycan. The chain crosses the membrane as a helical span at residues 99–119 (FLFIQEPASAVASLLNGLASL). At 120-135 (VMLCRYRASVPASSPM) the chain is on the cytoplasmic side. A helical membrane pass occupies residues 136-156 (YHTCMAFAWVSLNAWFWSTVF). Over 157-169 (HTRDTDLTEKMDY) the chain is Lumenal. The helical transmembrane segment at 170–190 (FCASAVILHSIYLCCVRTVGL) threads the bilayer. Topologically, residues 191–198 (QHPSVARA) are cytoplasmic. The chain crosses the membrane as a helical span at residues 199 to 219 (FGATLLLMLLLHTSYLSLVRF). The Lumenal portion of the chain corresponds to 220–223 (DYSY). A helical membrane pass occupies residues 224 to 244 (NMMANVAIGLVNLAWWLAWCL). Residues 245–258 (RNHRRLPHTRKCVA) lie on the Cytoplasmic side of the membrane. Residues 259 to 279 (VVLLLQGLSLLELLDFPPLFW) form a helical membrane-spanning segment. At 280–282 (VLD) the chain is on the lumenal side. The chain crosses the membrane as a helical span at residues 283 to 303 (AHAIWHISTIPVHVLFFRFLE). Over 304-320 (DDSLYLLKESEAKFKLD) the chain is Cytoplasmic.

Belongs to the PGAP3 family.

It localises to the golgi apparatus membrane. In terms of biological role, involved in the fatty acid remodeling steps of GPI-anchor maturation where the unsaturated acyl chain at sn-2 of inositol phosphate is replaced by a saturated stearoyl chain. May catalyze the first step of the fatty acid remodeling, by removing the unsaturated acyl chain at sn-2 of inositol phosphate, generating a lyso-GPI intermediate. The fatty acid remodeling steps is critical for the integration of GPI-APs into lipid rafts. The protein is GPI-specific phospholipase A2-like PGAP3 (PGAP3) of Cricetulus griseus (Chinese hamster).